Reading from the N-terminus, the 140-residue chain is ATP synthase epsilon chain (140 aa).

It belongs to the ATPase epsilon chain family. As to quaternary structure, F-type ATPases have 2 components, CF(1) - the catalytic core - and CF(0) - the membrane proton channel. CF(1) has five subunits: alpha(3), beta(3), gamma(1), delta(1), epsilon(1). CF(0) has three main subunits: a, b and c.

It localises to the cell inner membrane. Produces ATP from ADP in the presence of a proton gradient across the membrane. This is ATP synthase epsilon chain from Xanthomonas oryzae pv. oryzae (strain MAFF 311018).